Here is a 166-residue protein sequence, read N- to C-terminus: Protein-export protein SecB (166 aa).

The protein belongs to the SecB family. As to quaternary structure, homotetramer, a dimer of dimers. One homotetramer interacts with 1 SecA dimer.

The protein localises to the cytoplasm. Its function is as follows. One of the proteins required for the normal export of preproteins out of the cell cytoplasm. It is a molecular chaperone that binds to a subset of precursor proteins, maintaining them in a translocation-competent state. It also specifically binds to its receptor SecA. In Actinobacillus pleuropneumoniae serotype 5b (strain L20), this protein is Protein-export protein SecB.